The chain runs to 122 residues: Large ribosomal subunit protein uL14 (122 aa).

It belongs to the universal ribosomal protein uL14 family. As to quaternary structure, part of the 50S ribosomal subunit. Forms a cluster with proteins L3 and L19. In the 70S ribosome, L14 and L19 interact and together make contacts with the 16S rRNA in bridges B5 and B8.

Binds to 23S rRNA. Forms part of two intersubunit bridges in the 70S ribosome. The protein is Large ribosomal subunit protein uL14 of Thermosipho melanesiensis (strain DSM 12029 / CIP 104789 / BI429).